The primary structure comprises 34 residues: Corticostatin-6 (34 aa).

3 cysteine pairs are disulfide-bonded: Cys3–Cys31, Cys5–Cys20, and Cys10–Cys30.

This sequence belongs to the alpha-defensin family. Lung, spleen, small intestine, pituitary gland, adrenal medulla and plasma.

The protein localises to the secreted. Its function is as follows. Microbicidal activity and inhibits corticotropin (ACTH) stimulated corticosterone production. This is Corticostatin-6 from Oryctolagus cuniculus (Rabbit).